The sequence spans 241 residues: Beta-nerve growth factor (241 aa).

The signal sequence occupies residues 1–18 (MSMLFYTLITALLIGIQA). A propeptide spanning residues 19–121 (APHTESNVPA…SFNRTHRSKR (103 aa)) is cleaved from the precursor. Cystine bridges form between C136-C201, C179-C229, and C189-C231. N166 carries N-linked (GlcNAc...) asparagine glycosylation. Positions 173 and 209 each coordinate a 1-acyl-sn-glycero-3-phospho-(1D-myo-inositol). K209 provides a ligand contact to a 1-acyl-sn-glycero-3-phospho-L-serine.

Belongs to the NGF-beta family. As to quaternary structure, homodimer. The homodimer interacts with a single NTRK1 chain. The homodimer interacts with a single NGFR chain. The NGF dimer interacts with a single SORCS2 chain (via extracellular domain). The NGF precursor (proNGF) binds to a receptor complex formed by SORT1 and NGFR, which leads to NGF endocytosis. Both mature NGF and the immature NGF precursor (proNGF) interact with SORCS2 and with the heterodimer formed by SORCS2 and NGFR (via extracellular domains). The NGF precursor (proNGF) has much higher affinity for SORCS2 than mature NGF. The NGF precursor (proNGF) has much higher affinity for SORT1 than mature NGF. Interacts with ADAM10 in a divalent cation-dependent manner. Interacts with SORCS3.

It is found in the secreted. The protein resides in the endosome lumen. Functionally, nerve growth factor is important for the development and maintenance of the sympathetic and sensory nervous systems. Extracellular ligand for the NTRK1 and NGFR receptors, activates cellular signaling cascades to regulate neuronal proliferation, differentiation and survival. The immature NGF precursor (proNGF) functions as a ligand for the heterodimeric receptor formed by SORCS2 and NGFR, and activates cellular signaling cascades that lead to inactivation of RAC1 and/or RAC2, reorganization of the actin cytoskeleton and neuronal growth cone collapse. In contrast to mature NGF, the precursor form (proNGF) promotes neuronal apoptosis (in vitro). Inhibits metalloproteinase-dependent proteolysis of platelet glycoprotein VI. Binds lysophosphatidylinositol and lysophosphatidylserine between the two chains of the homodimer. The lipid-bound form promotes histamine relase from mast cells, contrary to the lipid-free form. The chain is Beta-nerve growth factor (NGF) from Bos taurus (Bovine).